Consider the following 791-residue polypeptide: Putative inactive tyrosine-protein kinase Wsck (791 aa).

Residues Met1 to Gly26 form the signal peptide. The Extracellular portion of the chain corresponds to Leu27–Ser401. Residues Ala39–Ile125 form the WSC domain. Residues Gly131–Gly246 form the Fibronectin type-III domain. Residues Asn139, Asn217, and Asn329 are each glycosylated (N-linked (GlcNAc...) asparagine). A helical transmembrane segment spans residues Val402 to Ala422. Over Tyr423–Gly791 the chain is Cytoplasmic. One can recognise a Protein kinase domain in the interval Leu493 to Met758. Ile499–Ile507 contacts ATP.

The protein belongs to the protein kinase superfamily. Tyr protein kinase family.

The protein resides in the membrane. Probably lacks tyrosine-protein kinase activity. The protein is Putative inactive tyrosine-protein kinase Wsck of Drosophila melanogaster (Fruit fly).